The primary structure comprises 351 residues: uncharacterized protein (351 aa).

Positions 23, 25, 151, 184, 212, and 270 each coordinate Zn(2+). K151 carries the post-translational modification N6-carboxylysine.

This sequence belongs to the metallo-dependent hydrolases superfamily. Phosphotriesterase family. Requires Zn(2+) as cofactor.

This is an uncharacterized protein from Mycoplasma pneumoniae (strain ATCC 29342 / M129 / Subtype 1) (Mycoplasmoides pneumoniae).